The primary structure comprises 124 residues: uncharacterized protein (124 aa).

3 helical membrane-spanning segments follow: residues 14-34 (KAIV…YGWQ), 41-61 (FSYG…IIFY), and 85-105 (MVFI…AFFV).

It is found in the cell membrane. This is an uncharacterized protein from Haemophilus influenzae (strain ATCC 51907 / DSM 11121 / KW20 / Rd).